The chain runs to 320 residues: Cytochrome f (320 aa).

The signal sequence occupies residues methionine 1–serine 32. Heme is bound by residues tyrosine 36, cysteine 56, cysteine 59, and histidine 60. A helical membrane pass occupies residues isoleucine 286–lysine 306.

It belongs to the cytochrome f family. The 4 large subunits of the cytochrome b6-f complex are cytochrome b6, subunit IV (17 kDa polypeptide, petD), cytochrome f and the Rieske protein, while the 4 small subunits are PetG, PetL, PetM and PetN. The complex functions as a dimer. Requires heme as cofactor.

The protein resides in the plastid. It localises to the chloroplast thylakoid membrane. Its function is as follows. Component of the cytochrome b6-f complex, which mediates electron transfer between photosystem II (PSII) and photosystem I (PSI), cyclic electron flow around PSI, and state transitions. This Gnetum parvifolium (Small-leaved jointfir) protein is Cytochrome f.